Consider the following 119-residue polypeptide: Large ribosomal subunit protein bL20 (119 aa).

It belongs to the bacterial ribosomal protein bL20 family.

Its function is as follows. Binds directly to 23S ribosomal RNA and is necessary for the in vitro assembly process of the 50S ribosomal subunit. It is not involved in the protein synthesizing functions of that subunit. The sequence is that of Large ribosomal subunit protein bL20 from Geobacillus thermodenitrificans (strain NG80-2).